The sequence spans 375 residues: MPRVVIGMSGGVDSAVSAFLLKKRGFDVIGLHMINWDVQEEGTSHCPRSKDESDARNVCDRLNIPFHTVNFVKEYWNDVFLKFLENYKNGRTTVPDIDCNQSIKFDVFHKIAREKFNADFIATGHYATTNFGDFQQNAKDSDEIRLFSGKDPLKDQTFFLCTVNQEQLKRAMFPLGSLQKSEVKRIAEEQGFQEVAKKPESMGICFIGKKKRFSDFLDEYIEPKPGRILLKNGSEIGNHHGIHQFTIGKRINGKYLEARSHLGFFVSHIHSDTGDIIACEGSHHPDLYASRFLINHPKWIRTFDPFNRISSNNFLCRIQRTHPPIPCVAEKQEQFLSVIPRLALRATAPGQMCVFYNTKNECLGGGEIMNIQETL.

ATP contacts are provided by residues glycine 7–serine 14 and methionine 33. The interval valine 94 to aspartate 96 is interaction with target base in tRNA. The Nucleophile role is filled by cysteine 99. Residues cysteine 99 and cysteine 205 are joined by a disulfide bond. Glycine 124 provides a ligand contact to ATP. The segment at lysine 154–glutamine 156 is interaction with tRNA. Catalysis depends on cysteine 205, which acts as the Cysteine persulfide intermediate. Residues glutamine 319–arginine 320 are interaction with tRNA.

The protein belongs to the MnmA/TRMU family.

It localises to the mitochondrion. The catalysed reaction is 5-taurinomethyluridine(34) in tRNA + S-sulfanyl-L-cysteinyl-[protein] + AH2 + ATP = 5-taurinomethyl-2-thiouridine(34) in tRNA + L-cysteinyl-[protein] + A + AMP + diphosphate + H(+). Catalyzes the 2-thiolation of uridine at the wobble position (U34) of mitochondrial tRNA(Lys), tRNA(Glu) and tRNA(Gln). Required for the formation of 5-taurinomethyl-2-thiouridine (tm5s2U) of mitochondrial tRNA(Lys), tRNA(Glu), and tRNA(Gln) at the wobble position. ATP is required to activate the C2 atom of the wobble base. This chain is Probable mitochondrial tRNA-specific 2-thiouridylase 1, found in Caenorhabditis elegans.